Consider the following 237-residue polypeptide: Indole-3-glycerol phosphate synthase (237 aa).

It belongs to the TrpC family.

It catalyses the reaction 1-(2-carboxyphenylamino)-1-deoxy-D-ribulose 5-phosphate + H(+) = (1S,2R)-1-C-(indol-3-yl)glycerol 3-phosphate + CO2 + H2O. It functions in the pathway amino-acid biosynthesis; L-tryptophan biosynthesis; L-tryptophan from chorismate: step 4/5. The sequence is that of Indole-3-glycerol phosphate synthase from Thermoplasma volcanium (strain ATCC 51530 / DSM 4299 / JCM 9571 / NBRC 15438 / GSS1).